The sequence spans 492 residues: MTLWINGDWITGQGERRRKTNPVSAEILWQGNDANAAQVAEACQVARAAFPRWARQPFAARQAIVEKFAALLEAHKAELTEVIARETGKPRWEAATEVTAMINKIAISIKAYHARTGEQKSELVDGAATLRHRPHGVLAVFGPYNFPGHLPNGHIVPALLAGNTLIFKPSELTPWTGETVIKLWERAGLPAGVLNLVQGGRETGQALSSLDDLDGLLFTGSASTGYQLHRQLSGQPEKILALEMGGNNPLIIEDVANTDAAVHLTLQSAFITAGQRCTCARRLLVKQGAQGDAFLARLVDVAGRLQPGRWDDDPQPFIGGLISAQAAQHVMEAWRQREALGGRTLLAPRKVKEGTSLLTPGIIELTGVADVPDEEVFGPLLNVWRYAHFDEAIRLANNTRFGLSCGLVSTDRAQFEQLLLEARAGIVNWNKPLTGAASTAPFGGIGASGNHRPSAWYAADYCAWPMASLESPELTLPATLSPGLDFSRREAV.

An NAD(+)-binding site is contributed by 220–225 (GSASTG). Residues glutamate 243 and cysteine 277 contribute to the active site.

The protein belongs to the aldehyde dehydrogenase family. AstD subfamily.

The catalysed reaction is N-succinyl-L-glutamate 5-semialdehyde + NAD(+) + H2O = N-succinyl-L-glutamate + NADH + 2 H(+). Its pathway is amino-acid degradation; L-arginine degradation via AST pathway; L-glutamate and succinate from L-arginine: step 4/5. Functionally, catalyzes the NAD-dependent reduction of succinylglutamate semialdehyde into succinylglutamate. This Salmonella enteritidis PT4 (strain P125109) protein is N-succinylglutamate 5-semialdehyde dehydrogenase.